The chain runs to 243 residues: Peptidyl-tRNA hydrolase (243 aa).

Y14 is a tRNA binding site. H19 acts as the Proton acceptor in catalysis. F64, N66, and N112 together coordinate tRNA. Residues 190–205 are compositionally biased toward basic and acidic residues; sequence KAEEEKPAKEMKDAGK. The tract at residues 190–243 is disordered; it reads KAEEEKPAKEMKDAGKKPASQSHIHQARNHNQPKLPATGPMADMLKKMFGKKGD. A compositionally biased stretch (polar residues) spans 208–221; that stretch reads ASQSHIHQARNHNQ.

This sequence belongs to the PTH family. Monomer.

The protein localises to the cytoplasm. The enzyme catalyses an N-acyl-L-alpha-aminoacyl-tRNA + H2O = an N-acyl-L-amino acid + a tRNA + H(+). Its function is as follows. Hydrolyzes ribosome-free peptidyl-tRNAs (with 1 or more amino acids incorporated), which drop off the ribosome during protein synthesis, or as a result of ribosome stalling. In terms of biological role, catalyzes the release of premature peptidyl moieties from peptidyl-tRNA molecules trapped in stalled 50S ribosomal subunits, and thus maintains levels of free tRNAs and 50S ribosomes. This is Peptidyl-tRNA hydrolase from Rhizobium johnstonii (strain DSM 114642 / LMG 32736 / 3841) (Rhizobium leguminosarum bv. viciae).